The following is a 215-amino-acid chain: 3,4-dihydroxy-2-butanone 4-phosphate synthase (215 aa).

D-ribulose 5-phosphate contacts are provided by residues 38–39, D43, 151–155, and E175; these read RE and RRGHT. E39 lines the Mg(2+) pocket. H154 is a binding site for Mg(2+).

It belongs to the DHBP synthase family. As to quaternary structure, homodimer. It depends on Mg(2+) as a cofactor. Mn(2+) is required as a cofactor.

The catalysed reaction is D-ribulose 5-phosphate = (2S)-2-hydroxy-3-oxobutyl phosphate + formate + H(+). Its pathway is cofactor biosynthesis; riboflavin biosynthesis; 2-hydroxy-3-oxobutyl phosphate from D-ribulose 5-phosphate: step 1/1. Catalyzes the conversion of D-ribulose 5-phosphate to formate and 3,4-dihydroxy-2-butanone 4-phosphate. This chain is 3,4-dihydroxy-2-butanone 4-phosphate synthase, found in Haemophilus influenzae (strain PittEE).